A 954-amino-acid polypeptide reads, in one-letter code: Regulatory protein FlaEY (954 aa).

Functionally, functions in trans to modulate the level of transcription of the flagellin genes and several genes encoding chemotaxis functions. It is itself temporally controlled. This Caulobacter vibrioides (strain ATCC 19089 / CIP 103742 / CB 15) (Caulobacter crescentus) protein is Regulatory protein FlaEY (flaEY).